The following is a 2410-amino-acid chain: Reducing polyketide synthase FUB1 (2410 aa).

The span at 1-42 shows a compositional bias: low complexity; it reads MTLSNGSNGANGTSNGNGAHPSANGFHNAANGGANNGSANGG. The interval 1–52 is disordered; it reads MTLSNGSNGANGTSNGNGAHPSANGFHNAANGGANNGSANGGAEHDAGRPQV. The region spanning 57-479 is the Ketosynthase family 3 (KS3) domain; it reads SSAIAVIGVS…GANAHAVLDD (423 aa). Catalysis depends on for beta-ketoacyl synthase activity residues C230, H365, and H403. Positions 608-929 are malonyl-CoA:ACP transacylase (MAT) domain; sequence TFIFTGQGAQ…FSAIKRKQDA (322 aa). S699 serves as the catalytic For malonyltransferase activity. Residues 994 to 1127 are N-terminal hotdog fold; sequence LELLGVRDPR…GLVSTSYKHD (134 aa). The region spanning 994-1307 is the PKS/mFAS DH domain; the sequence is LELLGVRDPR…TVPLRGASDS (314 aa). The tract at residues 995–1302 is dehydratase (DH) domain; sequence ELLGVRDPRS…LKGCKTVPLR (308 aa). H1026 (proton acceptor; for dehydratase activity) is an active-site residue. The segment at 1155–1307 is C-terminal hotdog fold; that stretch reads LPSVDPTVFY…TVPLRGASDS (153 aa). Residue D1220 is the Proton donor; for dehydratase activity of the active site. The enoyl reductase (ER) domain stretch occupies residues 1714–2026; the sequence is GLLDTLEYLS…SGGHVGKIVL (313 aa). The ketoreductase (KR) domain stretch occupies residues 2050 to 2226; sequence ATYVLIGGLG…AATSINLSLV (177 aa). Positions 2329–2406 constitute a Carrier domain; that stretch reads EVYEIVLQQL…GFTKKVMAKS (78 aa). An O-(pantetheine 4'-phosphoryl)serine modification is found at S2366.

The protein operates within mycotoxin biosynthesis. In terms of biological role, reducing polyketide synthase; part of the gene cluster that mediates the biosynthesis of fusaric acid, a mycotoxin with low to moderate toxicity to animals and humans, but with high phytotoxic properties. L-aspartate is suggested as fusaric acid amino acid precursor that is activated and further processed to O-acetyl-L-homoserine by cluster enzymes aspartate kinase FUB3 and homoserine O-acetyltransferase FUB5, as well as enzymes of the primary metabolism. The polyketide synthase (PKS) FUB1 generates the triketide trans-2-hexenal which is presumptively released by the hydrolase FUB4 and linked to the NRPS-bound amino acid precursor by NAD(P)-dependent dehydrogenase FUB6. FUB1, FUB4, and the non-canonical NRPS Fub8 may form an enzyme complex. Further processing of the NRPS-bound intermediate might be carried out by FUB6 and the sulfhydrylase FUB7, enabling a spontaneous electrocyclization to close the carbon backbone of fusaric acid. Dihydrofusaric acid is likely to be released via reduction by the thioester reductase (TR) domain of FUB8 whereupon the final oxidation to fusaric acid may (also) be performed by the FMN-dependent dehydrogenase FUB9. In Gibberella fujikuroi (strain CBS 195.34 / IMI 58289 / NRRL A-6831) (Bakanae and foot rot disease fungus), this protein is Reducing polyketide synthase FUB1.